Here is a 197-residue protein sequence, read N- to C-terminus: Rac-like GTP-binding protein ARAC1 (197 aa).

13 to 20 (GDGAVGKT) contacts GTP. The Effector region signature appears at 35 to 43 (YVPTVFDNF). GTP-binding positions include 60 to 64 (DTAGQ) and 118 to 121 (TKLD). Position 194 is a cysteine methyl ester (Cys-194). A lipid anchor (S-geranylgeranyl cysteine) is attached at Cys-194. A propeptide spans 195–197 (SIL) (removed in mature form).

It belongs to the small GTPase superfamily. Rho family. In terms of assembly, interacts with SPK1. Ubiquitous.

The protein resides in the cytoplasm. The protein localises to the membrane. Functionally, inactive GDP-bound Rho GTPases reside in the cytosol, are found in a complex with Rho GDP-dissociation inhibitors (Rho GDIs), and are released from the GDI protein in order to translocate to membranes upon activation. This is Rac-like GTP-binding protein ARAC1 (ARAC1) from Arabidopsis thaliana (Mouse-ear cress).